The following is a 134-amino-acid chain: Cytochrome b5 (134 aa).

A2 bears the N-acetylalanine mark. N6-acetyllysine occurs at positions 7, 10, and 19. Positions 9 to 85 (VKYYTLEEIQ…SKTYIIGELH (77 aa)) constitute a Cytochrome b5 heme-binding domain. Positions 44 and 68 each coordinate heme. A helical membrane pass occupies residues 109-131 (WWTNWVIPAISALAVALMYRLYM).

Belongs to the cytochrome b5 family.

The protein localises to the endoplasmic reticulum membrane. It is found in the microsome membrane. Functionally, cytochrome b5 is a membrane-bound hemoprotein functioning as an electron carrier for several membrane-bound oxygenases. It is also involved in several steps of the sterol biosynthesis pathway, particularly in the C-5 double bond introduction during the C-5 desaturation. The protein is Cytochrome b5 (Cyb5a) of Mus musculus (Mouse).